The sequence spans 238 residues: Survival of motor neuron-related-splicing factor 30 (238 aa).

A Tudor domain is found at 72 to 132 (SWKVGDKCMA…KPVEEGRKAK (61 aa)). The short motif at 142 to 160 (KKEMIAQQREYKKKKALKK) is the Nuclear localization signal element. Position 201 is a phosphoserine (S201). Position 219 is an N6-acetyllysine (K219).

The protein belongs to the SMN family. Associates with spliceosomes. Associates with U4/U5/U6 tri-snRNP and with U2 snRNP.

Its subcellular location is the nucleus speckle. It is found in the nucleus. It localises to the cajal body. Its function is as follows. Involved in spliceosome assembly. The polypeptide is Survival of motor neuron-related-splicing factor 30 (SMNDC1) (Pongo abelii (Sumatran orangutan)).